Here is a 480-residue protein sequence, read N- to C-terminus: MAQNSVFFPDEFLAQMREALPAHLSFDAFIAACQRPLRRSIRVNTLKISVEDFLALVSPYRWQLTPVPWCAEGFWIEREDEDALPLGSTAEHLSGLFYIQEASSMLPVTALFAEDNQPERVMDVAAAPGSKTTQIAARMGNRGVILANEFSASRVKVLHANISRCGISNVALTHFDGRVFGAALPESFDAILLDAPCSGEGVVRKDPDALKNWSVASNLEIAATQRELIDSAFHALRPGGMLVYSTCTLNRDENESVCLWLKEQYPQAVEFLPLDSLFPSATEAVTPEGFLHVFPQIFDCEGFFVARMRKTAVIEPLPAPKYKVGNFPFAPLKGRETAQIVAAAQKAGLQWDENLRLWQRDKEIWLFPVEVETMIGKVRFSRIGMRLAEVHNKGYRWQHEAVIALANDANTFALTHTEAEEWYRGRDVYPELAPTSDEVVVTYQGFPLGLAKKIGSRLKNSYPRELVRDGRLFTVHDSAN.

Residues 125–131 (AAAPGSK), glutamate 149, aspartate 176, and aspartate 194 each bind S-adenosyl-L-methionine. Residue cysteine 247 is the Nucleophile of the active site.

Belongs to the class I-like SAM-binding methyltransferase superfamily. RsmB/NOP family.

It is found in the cytoplasm. The catalysed reaction is cytidine(1407) in 16S rRNA + S-adenosyl-L-methionine = 5-methylcytidine(1407) in 16S rRNA + S-adenosyl-L-homocysteine + H(+). Its function is as follows. Specifically methylates the cytosine at position 1407 (m5C1407) of 16S rRNA. This is Ribosomal RNA small subunit methyltransferase F from Enterobacter sp. (strain 638).